The following is a 164-amino-acid chain: MPKLIWIPESVVEAMLKDASRWHDLETGGTFMGYWSDANVAVITKMIDGGSEAIRTRKSFSPDREWEQSEIDRHYRVSGRVDTYIGDWHTHPNAQSGEPSWTDRRCLRTIIRSPEARAPRPVMILLCGGPENWLPHAWIGQLTRRALLFERVETTAATISTYKT.

Residues 5 to 142 form the MPN domain; it reads IWIPESVVEA…WLPHAWIGQL (138 aa). Zn(2+)-binding residues include His89, His91, and Asp103.

It belongs to the peptidase M67B family.

The protein is Probable metalloprotease y4qB of Sinorhizobium fredii (strain NBRC 101917 / NGR234).